Here is a 707-residue protein sequence, read N- to C-terminus: Leucine-rich repeat neuronal protein 3 (707 aa).

Positions 1 to 22 (MKDTPLQVHVLLGLAITTLVQA) are cleaved as a signal peptide. The LRRNT domain occupies 23–69 (IDKKVDCPQLCTCEIRPWFTPRSIYMEASTVDCNDLGLLNFPARLPA). Residues 23 to 626 (IDKKVDCPQL…DGKEYGKNHT (604 aa)) lie on the Extracellular side of the membrane. LRR repeat units follow at residues 70 to 91 (DTQI…TDFP), 93 to 114 (NLTG…NVQK), 117 to 138 (QLLS…CLYG), 141 to 162 (NLQE…AFIG), 165 to 186 (NLLR…WFDA), 189 to 210 (NLEI…NFQP), 213 to 234 (KLRS…ALAG), 237 to 258 (NLES…ALQK), 261 to 282 (NLKF…DFSN), 285 to 304 (HLKE…DSLA), 310 to 332 (DLRK…AFFR), and 335 to 358 (KLES…ESLP). 2 N-linked (GlcNAc...) asparagine glycosylation sites follow: asparagine 93 and asparagine 103. Asparagine 223 carries N-linked (GlcNAc...) asparagine glycosylation. An LRRCT domain is found at 368 to 421 (NPIRCDCVIRWINMNKTNIRFMEPDSLFCVDPPEFQGQNVRQVHFRDMMEICLP). Asparagine 382 carries an N-linked (GlcNAc...) asparagine glycan. In terms of domain architecture, Ig-like C2-type spans 421 to 514 (PLIAPESFPS…DLKSIMIKVG (94 aa)). The cysteines at positions 444 and 496 are disulfide-linked. Residues asparagine 522, asparagine 579, asparagine 608, and asparagine 624 are each glycosylated (N-linked (GlcNAc...) asparagine). Residues 523-614 (GSLNIKIRDI…QCVNVTTKSL (92 aa)) form the Fibronectin type-III domain. The helical transmembrane segment at 627–647 (VFVACVGGLLGIIGVMCLFSC) threads the bilayer. The Cytoplasmic segment spans residues 648-707 (VSQEGSSEGEHSYAVNHCHKPALAFSELYPPLINLWESSKEKRATLEVKATAIGVPTNMS).

As to expression, expressed in the brain, in Stronger expression in the ventricular zone and anlage of thalamus, spinal cord, and dorsal root ganglion in 11-17 dpc cerebellum and cerebral cortex in adults.

Its subcellular location is the membrane. This chain is Leucine-rich repeat neuronal protein 3 (Lrrn3), found in Mus musculus (Mouse).